We begin with the raw amino-acid sequence, 171 residues long: Myosin regulatory light chain 12A (171 aa).

A Phosphothreonine; by MLCK modification is found at Thr18. Ser19 carries the post-translational modification Phosphoserine; by MLCK. EF-hand domains lie at 28-63 (SQIQEFKEAFNMIDQNRDGFIDKEDLHDMLASLGKN), 97-132 (DPEDVIRNAFACFDEEATGTIQEDYLRELLTTMGDR), and 133-168 (FTDEEVDELYREAPIDKKGNFNYIEFTRILKHGAKD). Asp41, Asn43, Asp45, and Asp52 together coordinate Ca(2+).

Myosin is a hexamer of 2 heavy chains and 4 light chains. In terms of processing, phosphorylation increases the actin-activated myosin ATPase activity and thereby regulates the contractile activity. It is required to generate the driving force in the migration of the cells but not necessary for localization of myosin-2 at the leading edge.

Functionally, myosin regulatory subunit that plays an important role in regulation of both smooth muscle and nonmuscle cell contractile activity via its phosphorylation. Implicated in cytokinesis, receptor capping, and cell locomotion. In Homo sapiens (Human), this protein is Myosin regulatory light chain 12A (MYL12A).